The sequence spans 283 residues: MAVPPTYADLGKSARDVFTKGYGFGLIKLDLKTKSENGLEFTSSGSANTETTKVTGSLETKYRWTEYGLTFTEKWNTDNTLGTEITVEDQLARGLKLTFDSSFSPNTGKKNAKIKTGYKREHINLGCDMDFDIAGPSIRGALVLGYEGWLAGYQMNFETAKSRVTQSNFAVGYKTDEFQLHTNVNDGTEFGGSIYQKVNKKLETAVNLAWTAGNSNTRFGIAAKYQIDPDACFSAKVNNSSLIGLGYTQTLKPGIKLTLSALLDGKNVNAGGHKLGLGLEFQA.

An N-acetylalanine modification is found at Ala-2. Position 12 (Lys-12) interacts with ATP. Lys-12 is covalently cross-linked (Glycyl lysine isopeptide (Lys-Gly) (interchain with G-Cter in ubiquitin)). Phosphoserine is present on Ser-13. Phosphothreonine is present on Thr-19. Lys-20 serves as a coordination point for ATP. An N6-acetyllysine; alternate modification is found at Lys-20. An N6-succinyllysine; alternate modification is found at Lys-20. Residue Lys-20 forms a Glycyl lysine isopeptide (Lys-Gly) (interchain with G-Cter in ubiquitin); alternate linkage. 2 beta stranded membrane passes run 26 to 35 and 39 to 47; these read LIKLDLKTKS and LEFTSSGSA. Glycyl lysine isopeptide (Lys-Gly) (interchain with G-Cter in ubiquitin) cross-links involve residues Lys-53 and Lys-61. A beta stranded transmembrane segment spans residues 54-64; that stretch reads VTGSLETKYRW. Phosphotyrosine is present on Tyr-67. 3 beta stranded membrane passes run 69–76, 80–89, and 95–104; these read LTFTEKWN, TLGTEITVED, and LKLTFDSSFS. Residue Thr-107 is modified to Phosphothreonine. N6-acetyllysine; alternate is present on Lys-109. A Glycyl lysine isopeptide (Lys-Gly) (interchain with G-Cter in ubiquitin); alternate cross-link involves residue Lys-109. Residue Lys-110 forms a Glycyl lysine isopeptide (Lys-Gly) (interchain with G-Cter in ubiquitin) linkage. The next 4 membrane-spanning stretches (beta stranded) occupy residues 111–120, 123–130, 137–145, and 150–158; these read NAKIKTGYKR, INLGCDMD, SIRGALVLG, and LAGYQMNFE. Lys-161 is covalently cross-linked (Glycyl lysine isopeptide (Lys-Gly) (interchain with G-Cter in ubiquitin)). The next 6 membrane-spanning stretches (beta stranded) occupy residues 163–175, 178–185, 189–198, 202–211, 218–227, and 231–238; these read RVTQSNFAVGYKT, FQLHTNVN, EFGGSIYQKV, LETAVNLAWT, RFGIAAKYQI, and ACFSAKVN. At Ser-193 the chain carries Phosphoserine; by NEK1. At Ser-240 the chain carries Phosphoserine. 242–244 is an NAD(+) binding site; sequence LIG. The beta stranded transmembrane segment at 242–251 threads the bilayer; the sequence is LIGLGYTQTL. An N6-acetyllysine modification is found at Lys-252. Residues 254-263 form a beta stranded membrane-spanning segment; that stretch reads GIKLTLSALL. NAD(+) is bound at residue 260 to 264; it reads SALLD. At Lys-266 the chain carries N6-acetyllysine; alternate. Residue Lys-266 forms a Glycyl lysine isopeptide (Lys-Gly) (interchain with G-Cter in ubiquitin); alternate linkage. The beta stranded transmembrane segment at 273 to 282 threads the bilayer; it reads HKLGLGLEFQ. A Glycyl lysine isopeptide (Lys-Gly) (interchain with G-Cter in ubiquitin) cross-link involves residue Lys-274.

This sequence belongs to the eukaryotic mitochondrial porin family. Homodimer and homotrimer; in response to cyclic AMP or calcium; oligomerization is required for scramblase activity. Component of the mitochondrial permeability transition pore complex (mPTPC), at least composed of SPG7, VDAC1 and PPIF. Interacts with SPG7, NIPSNAP2 and SLC25A30. Interacts with hexokinases including HK1. The HK1-VDAC1 complex interacts with ATF2. Interacts with BCL2L1. Interacts with BAK1. Interacts with RTL10/BOP (via BH3 domain). Interacts with amyloid-beta and APP; induces VDAC1 dephosphorylation. Interacts with TMEM41B. Interacts with BCAP31. Interacts with HSPA9; this interaction couples ITPR1 to VDAC1. As to quaternary structure, (Microbial infection) Interacts with influenza A virus PB1-F2 protein. Post-translationally, phosphorylation at Ser-193 by NEK1 promotes the closed conformational state preventing excessive mitochondrial membrane permeability and subsequent apoptotic cell death after injury. Phosphorylation by the AKT-GSK3B axis stabilizes the protein probably by preventing ubiquitin-mediated proteasomal degradation. In terms of processing, ubiquitinated. Undergoes monoubiquitination and polyubiquitination by PRKN; monoubiquitination at Lys-274 inhibits apoptosis, whereas polyubiquitination leads to its degradation and promotes mitophagy. Deubiquitinated by USP30. In terms of tissue distribution, expressed in erythrocytes (at protein level). Expressed in heart, liver and skeletal muscle.

Its subcellular location is the mitochondrion outer membrane. It is found in the cell membrane. The protein resides in the membrane raft. The catalysed reaction is chloride(in) = chloride(out). It catalyses the reaction K(+)(in) = K(+)(out). The enzyme catalyses ATP(in) = ATP(out). It carries out the reaction Ca(2+)(in) = Ca(2+)(out). The catalysed reaction is Na(+)(in) = Na(+)(out). It catalyses the reaction Mg(2+)(in) = Mg(2+)(out). The enzyme catalyses L-glutamate(out) = L-glutamate(in). It carries out the reaction dopamine(out) = dopamine(in). The catalysed reaction is acetylcholine(in) = acetylcholine(out). It catalyses the reaction Fe(III)-[cytochrome c](out) = Fe(III)-[cytochrome c](in). The enzyme catalyses a 1,2-diacyl-sn-glycero-3-phosphocholine(in) = a 1,2-diacyl-sn-glycero-3-phosphocholine(out). It carries out the reaction a 1,2-diacyl-sn-glycero-3-phospho-L-serine(in) = a 1,2-diacyl-sn-glycero-3-phospho-L-serine(out). Its activity is regulated as follows. Inhibited by nitric oxide. In terms of biological role, non-selective voltage-gated ion channel that mediates the transport of anions and cations through the mitochondrion outer membrane and plasma membrane. The channel at the outer mitochondrial membrane allows diffusion of small hydrophilic molecules; in the plasma membrane it is involved in cell volume regulation and apoptosis. It adopts an open conformation at low or zero membrane potential and a closed conformation at potentials above 30-40 mV. The open state has a weak anion selectivity whereas the closed state is cation-selective. Binds various signaling molecules, including the sphingolipid ceramide, the phospholipid phosphatidylcholine, and the sterols cholesterol and oxysterol. In depolarized mitochondria, acts downstream of PRKN and PINK1 to promote mitophagy or prevent apoptosis; polyubiquitination by PRKN promotes mitophagy, while monoubiquitination by PRKN decreases mitochondrial calcium influx which ultimately inhibits apoptosis. May participate in the formation of the permeability transition pore complex (PTPC) responsible for the release of mitochondrial products that triggers apoptosis. May mediate ATP export from cells. Part of a complex composed of HSPA9, ITPR1 and VDAC1 that regulates mitochondrial calcium-dependent apoptosis by facilitating calcium transport from the ER lumen to the mitochondria intermembrane space thus providing calcium for the downstream calcium channel MCU that directly releases it into mitochondria matrix. Mediates cytochrome c efflux. Its function is as follows. Catalyzes the scrambling of phospholipids across the outer mitochondrial membrane; the mechanism is unrelated to channel activity and is capable of translocating both anionic and zwitterionic phospholipids. In Homo sapiens (Human), this protein is Non-selective voltage-gated ion channel VDAC1.